The primary structure comprises 1515 residues: Metal resistance protein YCF1 (1515 aa).

At 1–32 the chain is on the vacuolar side; that stretch reads MAGNLVSWACKLCRSPEGFGPISFYGDFTQCF. The chain crosses the membrane as a helical span at residues 33-53; the sequence is IDGVILNLSAIFMITFGIRDL. Over 54–73 the chain is Cytoplasmic; it reads VNLCKKKHSGIKYRRNWIIV. The chain crosses the membrane as a helical span at residues 74 to 94; that stretch reads SRMALVLLEIAFVSLASLNIS. Residues 95–99 are Vacuolar-facing; sequence KEEAE. The helical transmembrane segment at 100-120 threads the bilayer; the sequence is NFTIVSQYASTMLSLFVALAL. Topologically, residues 121–130 are cytoplasmic; it reads HWIEYDRSVV. The helical transmembrane segment at 131–151 threads the bilayer; it reads ANTVLLFYWLFETFGNFAKLI. Topologically, residues 152 to 169 are vacuolar; sequence NILIRHTYEGIWYSGQTG. A helical membrane pass occupies residues 170–190; it reads FILTLFQVITCASILLLEALP. Residues 191–278 lie on the Cytoplasmic side of the membrane; sequence KKPLMPHQHI…QKSNPSLSWA (88 aa). At S251 the chain carries Phosphoserine. The chain crosses the membrane as a helical span at residues 279–299; the sequence is ICRTFGSKMLLAAFFKAIHDV. The 304-residue stretch at 287–590 folds into the ABC transmembrane type-1 1 domain; that stretch reads MLLAAFFKAI…IPMVLNSFIE (304 aa). Residues 300-345 are Vacuolar-facing; sequence LAFTQPQLLRILIKFVTDYNSERQDDHSSLQGFENNHPQKLPIVRG. The chain crosses the membrane as a helical span at residues 346–366; the sequence is FLIAFAMFLVGFTQTSVLHQY. Residues 367-422 are Cytoplasmic-facing; that stretch reads FLNVFNTGMYIKSALTALIYQKSLVLSNEASGLSSTGDIVNLMSVDVQKLQDLTQW. Residues 423 to 443 form a helical membrane-spanning segment; that stretch reads LNLIWSGPFQIIICLYSLYKL. Over 444-446 the chain is Vacuolar; the sequence is LGN. The chain crosses the membrane as a helical span at residues 447-467; the sequence is SMWVGVIILVIMMPLNSFLMR. The Cytoplasmic segment spans residues 468–530; it reads IQKKLQKSQM…NLTKLGCYMA (63 aa). A helical membrane pass occupies residues 531-551; it reads VTSFQFNIVPFLVSCCTFAVF. At 552–572 the chain is on the vacuolar side; that stretch reads VYTEDRALTTDLVFPALTLFN. The helical transmembrane segment at 573–593 threads the bilayer; it reads LLSFPLMIIPMVLNSFIEASV. Topologically, residues 594–943 are cytoplasmic; sequence SIGRLFTFFT…VKWNIYLEYA (350 aa). Residues 626–853 form the ABC transporter 1 domain; the sequence is INIGDDATFL…ADSPLWKLLN (228 aa). 663–670 contributes to the ATP binding site; that stretch reads GKVGSGKT. Phosphoserine occurs at positions 873, 903, and 908. Residue T911 is modified to Phosphothreonine. Phosphoserine is present on S914. Residues 944-964 form a helical membrane-spanning segment; that stretch reads KACNPKSVCVFILFIVISMFL. Positions 951 to 1235 constitute an ABC transmembrane type-1 2 domain; that stretch reads VCVFILFIVI…IVRMTVEVET (285 aa). Residues 965–1001 lie on the Vacuolar side of the membrane; that stretch reads SVMGNVWLKHWSEVNSRYGSNPNAARYLAIYFALGIG. Residues 1002–1023 traverse the membrane as a helical segment; it reads SALATLIQTIVLWVFCTIHASK. Residues 1024–1066 are Cytoplasmic-facing; the sequence is YLHNLMTNSVLRAPMTFFETTPIGRILNRFSNDIYKVDALLGR. A helical membrane pass occupies residues 1067-1087; it reads TFSQFFVNAVKVTFTITVICA. Residue T1088 is a topological domain, vacuolar. The helical transmembrane segment at 1089–1109 threads the bilayer; that stretch reads TWQFIFIIIPLSVFYIYYQQY. Topologically, residues 1110 to 1180 are cytoplasmic; sequence YLRTSRELRR…NANRWLAYRL (71 aa). Residues 1181–1201 traverse the membrane as a helical segment; sequence ELIGSIIILGAATLSVFRLKQ. The Vacuolar portion of the chain corresponds to 1202–1205; the sequence is GTLT. A helical transmembrane segment spans residues 1206–1226; sequence AGMVGLSLSYALQITQTLNWI. Topologically, residues 1227–1515 are cytoplasmic; sequence VRMTVEVETN…CMEAGLVNEN (289 aa). The ABC transporter 2 domain maps to 1272–1507; it reads IKFNNYSTRY…NKSLFYSLCM (236 aa). An ATP-binding site is contributed by 1306-1313; that stretch reads GRTGAGKS.

This sequence belongs to the ABC transporter superfamily. ABCC family. Conjugate transporter (TC 3.A.1.208) subfamily.

It is found in the vacuole membrane. It carries out the reaction Cd(2+)(in) + ATP + H2O = Cd(2+)(out) + ADP + phosphate + H(+). It catalyses the reaction an S-substituted glutathione(in) + ATP + H2O = an S-substituted glutathione(out) + ADP + phosphate + H(+). Functionally, cooperates for the ATP-dependent vacuolar transport of bilirubin and glutathione conjugates. In Saccharomyces cerevisiae (strain ATCC 204508 / S288c) (Baker's yeast), this protein is Metal resistance protein YCF1 (YCF1).